The sequence spans 287 residues: Protease HtpX (287 aa).

A run of 2 helical transmembrane segments spans residues 4–24 (IFLL…VMSI) and 33–53 (GGLL…SLAI). His139 contacts Zn(2+). Glu140 is an active-site residue. His143 is a Zn(2+) binding site. 2 consecutive transmembrane segments (helical) span residues 154 to 174 (LIQG…ASII) and 195 to 215 (AVVF…VAYF). Glu220 serves as a coordination point for Zn(2+).

Belongs to the peptidase M48B family. It depends on Zn(2+) as a cofactor.

Its subcellular location is the cell inner membrane. The sequence is that of Protease HtpX from Shewanella loihica (strain ATCC BAA-1088 / PV-4).